Here is an 834-residue protein sequence, read N- to C-terminus: Prominin-2 (834 aa).

An N-terminal signal peptide occupies residues 1-26; the sequence is MKHTLALLAPLLGLGLGLALSQLAAG. Residues 27–106 lie on the Extracellular side of the membrane; sequence ATDCKFLGPA…NEVVRYEAGY (80 aa). The chain crosses the membrane as a helical span at residues 107 to 127; the sequence is VVCAVIAGLYLLLVPTAGLCF. The Cytoplasmic segment spans residues 128–153; that stretch reads CCCRCHRRCGGRVKTEHKALACERAA. A helical transmembrane segment spans residues 154–174; that stretch reads LMVFLLLTTLLLLIGVVCAFV. Residues 175–426 are Extracellular-facing; the sequence is TNQRTHEQMG…EVQRYETYRW (252 aa). N-linked (GlcNAc...) asparagine glycosylation occurs at Asn270. A helical transmembrane segment spans residues 427–447; that stretch reads IVGCVLCSVVLFVVLCNLLGL. The Cytoplasmic segment spans residues 448-472; sequence NLGIWGLSARDDPSHPEAKGEAGAR. A helical transmembrane segment spans residues 473 to 493; that stretch reads FLMAGVGLSFLFAAPLILLVF. At 494–779 the chain is on the extracellular side; that stretch reads ATFLVGGNVQ…LCDMMADPWN (286 aa). Ser727 bears the Phosphoserine mark. Residues 780–800 traverse the membrane as a helical segment; sequence AFWFCLAWCTFFLIPSIIFAV. Topologically, residues 801 to 834 are cytoplasmic; sequence KTSKYFRPIRKRLSSTSSEETQLFHIPRVTSLKL. A Phosphoserine modification is found at Ser818.

This sequence belongs to the prominin family. In terms of assembly, binds cholesterol. Post-translationally, glycosylated. Present in saliva within small membrane particles (at protein level). Expressed in kidney, prostate, trachea, esophagus, salivary gland, thyroid gland, mammary gland adrenal gland, placenta, stomach, spinal cord and liver. In submucosal tumor, expressed in spindle-shaped or stellate stromal cells. Expressed in prostate cancer cell lines.

The protein localises to the apical cell membrane. It localises to the basolateral cell membrane. Its subcellular location is the cell projection. The protein resides in the microvillus membrane. It is found in the cilium membrane. The sequence is that of Prominin-2 (PROM2) from Homo sapiens (Human).